A 40-amino-acid polypeptide reads, in one-letter code: Potassium channel toxin alpha-KTx 12.2 (40 aa).

Disulfide bonds link C2–C5, C10–C31, C16–C36, and C20–C38.

It belongs to the short scorpion toxin superfamily. Potassium channel inhibitor family. Alpha-KTx 12 subfamily. In terms of tissue distribution, expressed by the venom gland.

The protein resides in the secreted. Functionally, inhibits high conductance calcium-activated potassium channels. Reversibly inhibits Shaker B potassium channels. This chain is Potassium channel toxin alpha-KTx 12.2, found in Tityus trivittatus (Argentinean scorpion).